The sequence spans 37 residues: Omega/M-ectatotoxin-Et1a subunit A (37 aa).

A disulfide bond links Cys-12 and Cys-34.

It belongs to the ectatomin family. Ectatomin-Et subfamily. In terms of assembly, heterodimer of an A and a B chain; disulfide-linked. Expressed by the venom gland.

It is found in the secreted. It localises to the target cell membrane. In terms of biological role, algogenic for animals, human and insects. At high concentrations (0.5-1 uM), it acts as a pore-forming protein that forms nonselective cation channels both in cell and artificial membranes. It is weakly selective for cation over anions channel conductance is identical in both directions. At lower concentrations (1-10 nM), this heterodimer inhibits cardiac L-type calcium currents in isolated rat cardiac ventricular myocytes. The chain is Omega/M-ectatotoxin-Et1a subunit A from Ectatomma tuberculatum (Selva ant).